We begin with the raw amino-acid sequence, 251 residues long: tRNA (guanine-N(1)-)-methyltransferase (251 aa).

S-adenosyl-L-methionine is bound by residues glycine 113 and isoleucine 133–leucine 138.

This sequence belongs to the RNA methyltransferase TrmD family. Homodimer.

The protein resides in the cytoplasm. It catalyses the reaction guanosine(37) in tRNA + S-adenosyl-L-methionine = N(1)-methylguanosine(37) in tRNA + S-adenosyl-L-homocysteine + H(+). In terms of biological role, specifically methylates guanosine-37 in various tRNAs. In Methylococcus capsulatus (strain ATCC 33009 / NCIMB 11132 / Bath), this protein is tRNA (guanine-N(1)-)-methyltransferase.